A 467-amino-acid chain; its full sequence is Putative gluconeogenesis factor (467 aa).

A compositionally biased stretch (pro residues) spans Met1 to Ser12. Positions Met1–Arg27 are disordered.

It belongs to the gluconeogenesis factor family.

It is found in the cytoplasm. Functionally, required for morphogenesis under gluconeogenic growth conditions. The chain is Putative gluconeogenesis factor from Deinococcus radiodurans (strain ATCC 13939 / DSM 20539 / JCM 16871 / CCUG 27074 / LMG 4051 / NBRC 15346 / NCIMB 9279 / VKM B-1422 / R1).